The primary structure comprises 670 residues: Outer dynein arm-docking complex subunit 1 (670 aa).

Coiled-coil stretches lie at residues 9 to 155 (SKEV…RYLN), 183 to 224 (AVRE…EQLH), and 302 to 381 (NFIN…IQLL). A disordered region spans residues 454 to 473 (KMAPLQPPDTLEDPPGFEAS). Position 517 is a phosphoserine (Ser517). Disordered regions lie at residues 526 to 596 (AGSS…ASSG) and 616 to 670 (VGSS…DSRG). Polar residues predominate over residues 584 to 596 (GHVTFGSTSASSG). Positions 650–670 (SSTGPASSTGPGSSTSKDSRG) are enriched in low complexity.

It belongs to the ODA1/DCC2 family. In terms of assembly, component of the outer dynein arm-docking complex along with ODAD2, ODAD3, ODAD4 and CLXN. Interacts with ODAD3. Interacts with ODAD4; this interaction may facilitate the recruitment and/or attachment of outer dynein arm docking complex proteins, including ODAD1, ODAD3, and ODAD4 to ciliary axonemes. Interacts with DNAH9. Interacts with MNS1. Interacts with PIERCE1 and PIERCE2; the interactions link the outer dynein arms docking complex (ODA-DC) to the internal microtubule inner proteins (MIP) in cilium axoneme. In terms of tissue distribution, expressed in nasal epithelial cells. Highly expressed in testis and also detected in lung, brain and kidney.

Its subcellular location is the cytoplasm. The protein localises to the cytoskeleton. It is found in the cilium axoneme. In terms of biological role, component of the outer dynein arm-docking complex (ODA-DC) that mediates outer dynein arms (ODA) binding onto the doublet microtubule. Involved in mediating assembly of both ODAs and their axonemal docking complex onto ciliary microtubules. The protein is Outer dynein arm-docking complex subunit 1 of Homo sapiens (Human).